Consider the following 261-residue polypeptide: uncharacterized protein (261 aa).

It belongs to the PaiB family.

This is an uncharacterized protein from Aspergillus fumigatus (strain ATCC MYA-4609 / CBS 101355 / FGSC A1100 / Af293) (Neosartorya fumigata).